A 206-amino-acid polypeptide reads, in one-letter code: Small ribosomal subunit protein uS4 (206 aa).

The tract at residues leucine 29–serine 52 is disordered. Residues arginine 96–valine 171 enclose the S4 RNA-binding domain.

The protein belongs to the universal ribosomal protein uS4 family. In terms of assembly, part of the 30S ribosomal subunit. Contacts protein S5. The interaction surface between S4 and S5 is involved in control of translational fidelity.

Functionally, one of the primary rRNA binding proteins, it binds directly to 16S rRNA where it nucleates assembly of the body of the 30S subunit. Its function is as follows. With S5 and S12 plays an important role in translational accuracy. This chain is Small ribosomal subunit protein uS4, found in Deinococcus deserti (strain DSM 17065 / CIP 109153 / LMG 22923 / VCD115).